Reading from the N-terminus, the 123-residue chain is Small ribosomal subunit protein eS25 (123 aa).

Basic and acidic residues predominate over residues 1–13 (MPPKKDTKGDSKK). A disordered region spans residues 1-34 (MPPKKDTKGDSKKGQKAKAGSGGGKAKKKKWSKG). A compositionally biased stretch (basic residues) spans 25-34 (KAKKKKWSKG).

It belongs to the eukaryotic ribosomal protein eS25 family.

The protein is Small ribosomal subunit protein eS25 (RPS25) of Branchiostoma belcheri (Amphioxus).